Consider the following 147-residue polypeptide: MSEVKHLEINYKTDELFEAFREFGNKDLYMVEELQGQMIDASSESPFYGIFHGENLVARMALLKKGDVEEIYFPEFDDYLLLWKLEVLDNYKNKGYGQSLIDYAKSYNMPIKAIARQNSKEFLMNQDFEDVHAKNPEGHDVLVWAPK.

One can recognise an N-acetyltransferase domain in the interval Leu-7 to Lys-147.

This is an uncharacterized protein from Staphylococcus haemolyticus (strain JCSC1435).